The following is a 394-amino-acid chain: 1-deoxy-D-xylulose 5-phosphate reductoisomerase (394 aa).

The NADPH site is built by Thr-12, Gly-13, Ser-14, Ile-15, Gly-38, and Asn-126. Lys-127 provides a ligand contact to 1-deoxy-D-xylulose 5-phosphate. Glu-128 is an NADPH binding site. Mn(2+) is bound at residue Asp-151. 1-deoxy-D-xylulose 5-phosphate contacts are provided by Ser-152, Glu-153, Ser-177, and His-200. Glu-153 is a binding site for Mn(2+). Residue Gly-206 participates in NADPH binding. Residues Ser-213, Asn-218, Lys-219, and Glu-222 each contribute to the 1-deoxy-D-xylulose 5-phosphate site. Residue Glu-222 participates in Mn(2+) binding.

This sequence belongs to the DXR family. It depends on Mg(2+) as a cofactor. Mn(2+) is required as a cofactor.

It carries out the reaction 2-C-methyl-D-erythritol 4-phosphate + NADP(+) = 1-deoxy-D-xylulose 5-phosphate + NADPH + H(+). It functions in the pathway isoprenoid biosynthesis; isopentenyl diphosphate biosynthesis via DXP pathway; isopentenyl diphosphate from 1-deoxy-D-xylulose 5-phosphate: step 1/6. Catalyzes the NADPH-dependent rearrangement and reduction of 1-deoxy-D-xylulose-5-phosphate (DXP) to 2-C-methyl-D-erythritol 4-phosphate (MEP). The sequence is that of 1-deoxy-D-xylulose 5-phosphate reductoisomerase from Beutenbergia cavernae (strain ATCC BAA-8 / DSM 12333 / CCUG 43141 / JCM 11478 / NBRC 16432 / NCIMB 13614 / HKI 0122).